The primary structure comprises 524 residues: Lysophospholipid acyltransferase LPCAT4 (524 aa).

The next 2 membrane-spanning stretches (helical) occupy residues 40-62 (CLLG…FLLW) and 87-107 (TVCH…LGFL). Residues 129–134 (HSTFFD) carry the HXXXXD motif motif. N-linked (GlcNAc...) asparagine glycosylation is present at asparagine 152. A disordered region spans residues 490–524 (PHKPRSTSQIPNASSPSSPTALANGTVQAPKQKGD). Residues 495-518 (STSQIPNASSPSSPTALANGTVQA) show a composition bias toward polar residues.

The protein belongs to the 1-acyl-sn-glycerol-3-phosphate acyltransferase family. As to expression, widely expressed with much higher level in brain. Expressed in erythroleukemic cells but not in reticulocytes.

The protein localises to the endoplasmic reticulum membrane. It catalyses the reaction a 1-acyl-sn-glycero-3-phosphoethanolamine + an acyl-CoA = a 1,2-diacyl-sn-glycero-3-phosphoethanolamine + CoA. The enzyme catalyses a 1-O-(1Z-alkenyl)-sn-glycero-3-phosphoethanolamine + an acyl-CoA = a 1-O-(1Z-alkenyl)-2-acyl-sn-glycero-3-phosphoethanolamine + CoA. The catalysed reaction is a 1-acyl-sn-glycero-3-phosphocholine + an acyl-CoA = a 1,2-diacyl-sn-glycero-3-phosphocholine + CoA. It carries out the reaction a 1-O-alkyl-sn-glycero-3-phosphocholine + acetyl-CoA = a 1-O-alkyl-2-acetyl-sn-glycero-3-phosphocholine + CoA. It catalyses the reaction a 1-acyl-sn-glycero-3-phospho-L-serine + an acyl-CoA = a 1,2-diacyl-sn-glycero-3-phospho-L-serine + CoA. The enzyme catalyses octanoyl-CoA + a 1-acyl-sn-glycero-3-phosphoethanolamine = 1-acyl-2-octanoyl-sn-glycero-3-phosphoethanolamine + CoA. The catalysed reaction is a 1-acyl-sn-glycero-3-phosphoethanolamine + hexadecanoyl-CoA = 1-acyl-2-hexadecanoyl-sn-glycero-3-phosphoethanolamine + CoA. It carries out the reaction a 1-acyl-sn-glycero-3-phosphoethanolamine + octadecanoyl-CoA = 1-acyl-2-octadecanoyl-sn-glycero-3-phosphoethanolamine + CoA. It catalyses the reaction a 1-acyl-sn-glycero-3-phosphoethanolamine + (9Z)-octadecenoyl-CoA = 1-acyl-2-(9Z)-octadecenoyl-sn-glycero-3-phosphoethanolamine + CoA. The enzyme catalyses a 1-acyl-sn-glycero-3-phosphoethanolamine + (5Z,8Z,11Z,14Z)-eicosatetraenoyl-CoA = 1-acyl-2-(5Z,8Z,11Z,14Z)-eicosatetraenoyl-sn-glycero-3-phosphoethanolamine + CoA. The catalysed reaction is a 1-O-(1Z-alkenyl)-sn-glycero-3-phosphoethanolamine + octanoyl-CoA = 1-O-(1Z)-alkenyl-2-octanoyl-sn-glycero-3-phosphoethanolamine + CoA. It carries out the reaction a 1-O-(1Z-alkenyl)-sn-glycero-3-phosphoethanolamine + hexadecanoyl-CoA = 1-O-(1Z)-alkenyl-2-hexadecanoyl-sn-glycero-3-phosphoethanolamine + CoA. It catalyses the reaction a 1-O-(1Z-alkenyl)-sn-glycero-3-phosphoethanolamine + octadecanoyl-CoA = 1-O-(1Z)-alkenyl-2-octadecanoyl-sn-glycero-3-phosphoethanolamine + CoA. The enzyme catalyses a 1-O-(1Z-alkenyl)-sn-glycero-3-phosphoethanolamine + (9Z)-octadecenoyl-CoA = 1-O-(1Z)-alkenyl-2-(9Z)-octadecenoyl-sn-glycero-3-phosphoethanolamine + CoA. The catalysed reaction is a 1-O-(1Z-alkenyl)-sn-glycero-3-phosphoethanolamine + (5Z,8Z,11Z,14Z)-eicosatetraenoyl-CoA = 1-O-(1Z)-alkenyl-2-(5Z,8Z,11Z,14Z)-eicosatetraenoyl-sn-glycero-3-phosphoethanolamine + CoA. It carries out the reaction a 1-acyl-sn-glycero-3-phosphocholine + hexadecanoyl-CoA = 1-acyl-2-hexadecanoyl-sn-glycero-3-phosphocholine + CoA. It catalyses the reaction a 1-acyl-sn-glycero-3-phosphocholine + (9Z)-octadecenoyl-CoA = a 1-acyl-2-(9Z)-octadecenoyl-sn-glycero-3-phosphocholine + CoA. The enzyme catalyses 1-O-hexadecyl-sn-glycero-3-phosphocholine + (9Z)-octadecenoyl-CoA = 1-O-hexadecyl-2-(9Z)-octadecenoyl-sn-glycero-3-phosphocholine + CoA. The catalysed reaction is 1-O-hexadecyl-sn-glycero-3-phosphocholine + (5Z,8Z,11Z,14Z)-eicosatetraenoyl-CoA = 1-O-hexadecyl-2-(5Z,8Z,11Z,14Z)-eicosatetraenoyl-sn-glycero-3-phosphocholine + CoA. It carries out the reaction 1-hexadecanoyl-sn-glycero-3-phospho-L-serine + (9Z)-octadecenoyl-CoA = 1-hexadecanoyl-2-(9Z-octadecenoyl)-sn-glycero-3-phospho-L-serine + CoA. It catalyses the reaction 1-octadecanoyl-sn-glycero-3-phospho-(1'-sn-glycerol) + (9Z)-octadecenoyl-CoA = 1-octadecanoyl-2-(9Z-octadecenoyl)-sn-glycero-3-phospho-(1'-sn-glycerol) + CoA. The enzyme catalyses 1-octadecanoyl-sn-glycero-3-phospho-(1'-sn-glycerol) + (5Z,8Z,11Z,14Z)-eicosatetraenoyl-CoA = 1-octadecanoyl-2-(5Z,8Z,11Z,14Z-eicosatetraenoyl)-sn-glycero-3-phospho-(1'-sn-glycerol) + CoA. It functions in the pathway lipid metabolism; phospholipid metabolism. Displays acyl-CoA-dependent lysophospholipid acyltransferase activity with a subset of lysophospholipids as substrates; converts lysophosphatidylethanolamine to phosphatidylethanolamine, 1-alkenyl-lysophatidylethanolamine to 1-alkenyl-phosphatidylethanolamine, lysophosphatidylglycerol and alkyl-lysophosphatidylcholine to phosphatidylglycerol and alkyl-phosphatidylcholine, respectively. In contrast, has no lysophosphatidylinositol, glycerol-3-phosphate, diacylglycerol or lysophosphatidic acid acyltransferase activity. Prefers long chain acyl-CoAs (C16, C18) as acyl donors. Converts lysophosphatidylcholine to phosphatidycholine. The protein is Lysophospholipid acyltransferase LPCAT4 (Lpcat4) of Mus musculus (Mouse).